A 906-amino-acid polypeptide reads, in one-letter code: ATP-dependent DNA helicase DDX11 (906 aa).

In terms of domain architecture, Helicase ATP-binding spans 9–442 (GGIHFPFPFP…KNLMYIKQIL (434 aa)). Residue 44 to 51 (SPTGTGKS) participates in ATP binding. The disordered stretch occupies residues 78-111 (APGSGPPSSEKNSLLTSSSCQEPTDTPRPAGEPD). The segment covering 85–96 (SSEKNSLLTSSS) has biased composition (low complexity). Position 260 is a phosphoserine (Ser-260). [4Fe-4S] cluster is bound by residues Cys-265 and Cys-283. Basic and acidic residues predominate over residues 284 to 301 (VDMQRSKREKNGTGEDKP). A disordered region spans residues 284–310 (VDMQRSKREKNGTGEDKPKRKRQKIQT). Positions 312 and 347 each coordinate [4Fe-4S] cluster. Residues 390–393 (DEAH) carry the DEAH box motif.

It belongs to the DEAD box helicase family. DEAH subfamily. DDX11/CHL1 sub-subfamily. In terms of assembly, associates with the CTF18-RFC complex. Associates with a cohesin complex composed of RAD21, SMC1 proteins and SMC3. Interacts with CHTF18. Interacts with DSCC1. Interacts with FEN1; this interaction is direct and increases flap endonuclease activity of FEN1. Interacts with PCNA. Interacts with POLR1A and UBTF. Interacts with RAD21, SMC1 proteins and SMC3. Interacts with RFC2. Interacts with TIMELESS; this interaction increases recruitment of both proteins onto chromatin in response to replication stress induction by hydroxyurea. Requires [4Fe-4S] cluster as cofactor.

Its subcellular location is the nucleus. The protein localises to the nucleolus. The protein resides in the cytoplasm. It localises to the cytoskeleton. It is found in the spindle pole. Its subcellular location is the midbody. The protein localises to the microtubule organizing center. The protein resides in the centrosome. The enzyme catalyses Couples ATP hydrolysis with the unwinding of duplex DNA at the replication fork by translocating in the 5'-3' direction. This creates two antiparallel DNA single strands (ssDNA). The leading ssDNA polymer is the template for DNA polymerase III holoenzyme which synthesizes a continuous strand.. The catalysed reaction is ATP + H2O = ADP + phosphate + H(+). DNA-dependent ATPase and ATP-dependent DNA helicase that participates in various functions in genomic stability, including DNA replication, DNA repair and heterochromatin organization as well as in ribosomal RNA synthesis. Its double-stranded DNA helicase activity requires either a minimal 5'-single-stranded tail length of approximately 15 nt (flap substrates) or 10 nt length single-stranded gapped DNA substrates of a partial duplex DNA structure for helicase loading and translocation along DNA in a 5' to 3' direction. The helicase activity is capable of displacing duplex regions up to 100 bp, which can be extended up to 500 bp by the replication protein A (RPA) or the cohesion CTF18-replication factor C (Ctf18-RFC) complex activities. Also shows ATPase- and helicase activities on substrates that mimic key DNA intermediates of replication, repair and homologous recombination reactions, including forked duplex, anti-parallel G-quadruplex and three-stranded D-loop DNA molecules. Plays a role in DNA double-strand break (DSB) repair at the DNA replication fork during DNA replication recovery from DNA damage. Recruited with TIMELESS factor upon DNA-replication stress response at DNA replication fork to preserve replication fork progression, and hence ensure DNA replication fidelity. Also cooperates with TIMELESS factor during DNA replication to regulate proper sister chromatid cohesion and mitotic chromosome segregation. Stimulates 5'-single-stranded DNA flap endonuclease activity of FEN1 in an ATP- and helicase-independent manner; and hence it may contribute in Okazaki fragment processing at DNA replication fork during lagging strand DNA synthesis. Its ability to function at DNA replication fork is modulated by its binding to long non-coding RNA (lncRNA) cohesion regulator non-coding RNA DDX11-AS1/CONCR, which is able to increase both DDX11 ATPase activity and binding to DNA replicating regions. Also plays a role in heterochromatin organization. Involved in rRNA transcription activation through binding to active hypomethylated rDNA gene loci by recruiting UBTF and the RNA polymerase Pol I transcriptional machinery. Plays a role in embryonic development and prevention of aneuploidy. Involved in melanoma cell proliferation and survival. Associates with chromatin at DNA replication fork regions. Binds to single- and double-stranded DNAs. The protein is ATP-dependent DNA helicase DDX11 of Mus musculus (Mouse).